The primary structure comprises 432 residues: Anaerobic glycerol-3-phosphate dehydrogenase subunit B (432 aa).

This sequence belongs to the anaerobic G-3-P dehydrogenase subunit B family. In terms of assembly, composed of a catalytic GlpA/B dimer and of membrane bound GlpC. Requires FMN as cofactor.

The enzyme catalyses a quinone + sn-glycerol 3-phosphate = dihydroxyacetone phosphate + a quinol. Its pathway is polyol metabolism; glycerol degradation via glycerol kinase pathway; glycerone phosphate from sn-glycerol 3-phosphate (anaerobic route): step 1/1. In terms of biological role, conversion of glycerol 3-phosphate to dihydroxyacetone. Uses fumarate or nitrate as electron acceptor. The polypeptide is Anaerobic glycerol-3-phosphate dehydrogenase subunit B (glpB) (Haemophilus influenzae (strain ATCC 51907 / DSM 11121 / KW20 / Rd)).